We begin with the raw amino-acid sequence, 319 residues long: Acetylglutamate kinase (319 aa).

Substrate-binding positions include 74–75 (GG), R96, and N210.

Belongs to the acetylglutamate kinase family. ArgB subfamily.

It localises to the cytoplasm. The catalysed reaction is N-acetyl-L-glutamate + ATP = N-acetyl-L-glutamyl 5-phosphate + ADP. It participates in amino-acid biosynthesis; L-arginine biosynthesis; N(2)-acetyl-L-ornithine from L-glutamate: step 2/4. Catalyzes the ATP-dependent phosphorylation of N-acetyl-L-glutamate. The chain is Acetylglutamate kinase from Pseudarthrobacter chlorophenolicus (strain ATCC 700700 / DSM 12829 / CIP 107037 / JCM 12360 / KCTC 9906 / NCIMB 13794 / A6) (Arthrobacter chlorophenolicus).